Consider the following 495-residue polypeptide: Serine/threonine-protein kinase STN8, chloroplastic (495 aa).

A chloroplast-targeting transit peptide spans 1-49; it reads MASLLSPATPTATSAAFHSCSTAGFSTPTHISSQNSSLSLLSRRGCMMR. In terms of domain architecture, Protein kinase spans 133–477; sequence FLVTEKLGEG…AAAALRHPYF (345 aa). Residues 139-147 and K186 each bind ATP; that span reads LGEGSFGVV. Catalysis depends on D308, which acts as the Proton acceptor.

The protein belongs to the protein kinase superfamily. Ser/Thr protein kinase family.

The protein localises to the plastid. The protein resides in the chloroplast thylakoid. The catalysed reaction is L-seryl-[protein] + ATP = O-phospho-L-seryl-[protein] + ADP + H(+). The enzyme catalyses L-threonyl-[protein] + ATP = O-phospho-L-threonyl-[protein] + ADP + H(+). Light-dependent serine/threonine protein kinase that specifically phosphorylates N-terminal threonine residues in psbA/D1, psbD/D2, psbC/CP43 and psbH, which are components of the core antenna complex of photosystem II. Phosphorylation of PSII core components facilitates the exchange of chlorophyll proteins between the grana and the stroma lamellae. Also involved in the phosphorylation of the calcium-sensing receptor (CaS). This Arabidopsis thaliana (Mouse-ear cress) protein is Serine/threonine-protein kinase STN8, chloroplastic (STN8).